A 754-amino-acid chain; its full sequence is Nibrin (754 aa).

In terms of domain architecture, FHA spans 24–83 (YVVGRKNCAILIENDQSISRNHAVLTANFSVTNLSQTDEIPVLTLKDNSKYGTFVNEEKM). 2 consecutive BRCT domains span residues 105-181 (KFRI…TEFL) and 224-315 (GKTF…LAVI). The tract at residues 111 to 328 (EPLVACSSCL…TKNYCDPQGH (218 aa)) is mediates interaction with SP100. Residues 221–402 (IFKGKTFIFL…FRMLSQDAPT (182 aa)) are interaction with MTOR, MAPKAP1 and RICTOR. Phosphoserine; by ATM is present on Ser278. Positions 326–346 (QGHPSTGLKTTTPGPSLSQGV) are disordered. The span at 328–346 (HPSTGLKTTTPGPSLSQGV) shows a compositional bias: polar residues. Thr337 carries the post-translational modification Phosphothreonine. Ser343 carries the post-translational modification Phosphoserine; by ATM. Position 347 is a phosphoserine (Ser347). Position 388 is an N6-lactoyllysine (Lys388). Disordered stretches follow at residues 396-415 (LSQD…NNNS) and 430-478 (QLSP…MSSC). Ser397 carries the post-translational modification Phosphoserine. Thr402 is modified (phosphothreonine). Composition is skewed to polar residues over residues 430–440 (QLSPTKLPSIN) and 447–462 (SQQQ…FQPS). Phosphoserine; by CDK2 is present on Ser432. Lys435 participates in a covalent cross-link: Glycyl lysine isopeptide (Lys-Gly) (interchain with G-Cter in ubiquitin). The Nuclear localization signal motif lies at 461–467 (PSTKKRE). A phosphoserine mark is found at Ser509 and Ser518. Glycyl lysine isopeptide (Lys-Gly) (interchain with G-Cter in SUMO2) cross-links involve residues Lys529, Lys571, and Lys582. Phosphoserine is present on residues Ser615 and Ser673. Residues Lys686, Lys690, and Lys735 each participate in a glycyl lysine isopeptide (Lys-Gly) (interchain with G-Cter in ubiquitin) cross-link. The FxF/Y motif signature appears at 740–749 (ADDLFRYNPY).

It belongs to the Nibrin family. In terms of assembly, component of the MRN complex composed of two heterodimers RAD50 and MRE11 associated with a single NBN. The MRN complexes dimerize on DNA to form joined MRN-MRN oligomers required for DNA double-strand break repair. As part of the MRN complex, interacts with MCM9; the interaction recruits the complex to DNA repair sites. Component of the BASC complex, at least composed of BRCA1, MSH2, MSH6, MLH1, ATM, BLM, RAD50, MRE11 and NBN. Interacts with histone H2AX; this requires phosphorylation of H2AX on 'Ser-139' and promotes NBN recruitment to DNA damage sites. Interacts with (phosphorylated) MDC1; promoting NBN recruitment to DNA damage sites. Interacts with (phosphorylated) RAD17; promoting NBN recruitment to DNA damage sites. Interacts (via FxF/Y motif) with ATM. Interacts with HJURP. Interacts with INTS3. Interacts with KPNA2. Interacts with TERF2; interaction is disrupted upon NBN phosphorylation by CDK2. Interacts with (phosphorylated) RBBP8/CtIP; the interaction links the role of the MRN complex in DNA double-strand break sensing to resection. Interacts with SP100; recruits NBN to PML bodies. Interacts with ATF2. Interacts with MTOR, MAPKAP1 isoform 2 and RICTOR; indicative for an association with the mTORC2 complex. Interacts with MRNIP. Interacts with UFL1; promoting UFL1 recruitment to double-strand breaks following DNA damage. Interacts with CYREN (via XLF motif). As to quaternary structure, (Microbial infection) Interacts with herpes simplex virus 1 protein UL12. Post-translationally, phosphorylated by ATM in response of ionizing radiation, and such phosphorylation is responsible intra-S phase checkpoint control and telomere maintenance. Phosphorylated at Ser-432 by CDK2 in S/G2 phases abolishes interaction with TERF2, enabling DCLRE1B/Apollo recruitment to telomeres. Phosphorylation at Ser-432 in response to dysfunctional telomeres promotes non-homologous end joining repair at telomeres, while dephosphorylation by PPP1CA promotes microhomology-mediated end-joining (MMEJ) repair. Ubiquitinated at Lys-435 via 'Lys-6'-linked ubiquitin chains by RNF8, promoting NBN recruitment to DNA double-strand breaks (DSBs). Ubiquitinated at Lys-686 and Lys-689 via 'Lys-63'-linked ubiquitin chains by PELI1: ubiquitination takes place following PELI1 phosphorylation and promotes ATM activation and DNA repair. Ubiquitinated at Lys-735 via 'Lys-63'-linked ubiquitin chains by the SCF(SKP2) complex: ubiquitination takes place following SKP2 phosphorylation and promotes ATM activation and DNA repair. In terms of processing, lactylation at Lys-388 by KAT5 in response to DNA damage promotes recruitment of the MRN complex to DNA damage sites. Delactylated by HDAC3. Ubiquitous. Expressed at high levels in testis.

The protein resides in the nucleus. The protein localises to the chromosome. Its subcellular location is the PML body. It localises to the telomere. Component of the MRN complex, which plays a central role in double-strand break (DSB) repair, DNA recombination, maintenance of telomere integrity and meiosis. The MRN complex is involved in the repair of DNA double-strand breaks (DSBs) via homologous recombination (HR), an error-free mechanism which primarily occurs during S and G2 phases. The complex (1) mediates the end resection of damaged DNA, which generates proper single-stranded DNA, a key initial steps in HR, and is (2) required for the recruitment of other repair factors and efficient activation of ATM and ATR upon DNA damage. The MRN complex possesses single-strand endonuclease activity and double-strand-specific 3'-5' exonuclease activity, which are provided by MRE11, to initiate end resection, which is required for single-strand invasion and recombination. Within the MRN complex, NBN acts as a protein-protein adapter, which specifically recognizes and binds phosphorylated proteins, promoting their recruitment to DNA damage sites. Recruits MRE11 and RAD50 components of the MRN complex to DSBs in response to DNA damage. Promotes the recruitment of PI3/PI4-kinase family members ATM, ATR, and probably DNA-PKcs to the DNA damage sites, activating their functions. Mediates the recruitment of phosphorylated RBBP8/CtIP to DSBs, leading to cooperation between the MRN complex and RBBP8/CtIP to initiate end resection. RBBP8/CtIP specifically promotes the endonuclease activity of the MRN complex to clear DNA ends containing protein adducts. The MRN complex is also required for the processing of R-loops. NBN also functions in telomere length maintenance via its interaction with TERF2: interaction with TERF2 during G1 phase preventing recruitment of DCLRE1B/Apollo to telomeres. NBN also promotes DNA repair choice at dysfunctional telomeres: NBN phosphorylation by CDK2 promotes non-homologous end joining repair at telomeres, while unphosphorylated NBN promotes microhomology-mediated end-joining (MMEJ) repair. Enhances AKT1 phosphorylation possibly by association with the mTORC2 complex. The chain is Nibrin from Homo sapiens (Human).